Reading from the N-terminus, the 330-residue chain is Neurogenic differentiation factor 4 (330 aa).

The disordered stretch occupies residues 1 to 79; it reads MTKTYTKAKE…RGPKKKKMTK (79 aa). The span at 25–35 shows a compositional bias: basic and acidic residues; the sequence is LSSKDELKAEN. The span at 52 to 64 shows a compositional bias: acidic residues; it reads DSIEEEEEEEDDG. The segment covering 67 to 79 has biased composition (basic residues); it reads PKRRGPKKKKMTK. The Nuclear localization signal motif lies at 73–79; it reads KKKKMTK. Residues 87–139 form the bHLH domain; sequence ARRVKANARERTRMHGLNDALDNLRRVMPCYSKTQKLSKIETLRLARNYIWAL. The leucine-zipper stretch occupies residues 162–183; the sequence is LSQPTSNLVAGCLQLGPQTLFL.

In terms of assembly, efficient DNA binding requires dimerization with another bHLH protein. In terms of processing, serine or threonine phosphorylation within the basic region may regulate neurogenic activity. In terms of tissue distribution, expressed in both the developing central nervous system and peripheral nervous system.

Its subcellular location is the nucleus. Probably acts as a transcriptional activator. Mediates neuronal differentiation. Required for the regulation of amacrine cell fate specification in the retina. The sequence is that of Neurogenic differentiation factor 4 (NEUROD4) from Gallus gallus (Chicken).